A 333-amino-acid polypeptide reads, in one-letter code: Nucleoid-associated protein PSPTO_1265 (333 aa).

This sequence belongs to the YejK family.

The protein localises to the cytoplasm. It is found in the nucleoid. The polypeptide is Nucleoid-associated protein PSPTO_1265 (Pseudomonas syringae pv. tomato (strain ATCC BAA-871 / DC3000)).